A 64-amino-acid chain; its full sequence is DNA-directed RNA polymerase subunit Rpo10 (64 aa).

4 residues coordinate Zn(2+): Cys7, Cys10, Cys45, and Cys46.

Belongs to the archaeal Rpo10/eukaryotic RPB10 RNA polymerase subunit family. Part of the RNA polymerase complex. Zn(2+) is required as a cofactor.

It is found in the cytoplasm. It carries out the reaction RNA(n) + a ribonucleoside 5'-triphosphate = RNA(n+1) + diphosphate. Functionally, DNA-dependent RNA polymerase (RNAP) catalyzes the transcription of DNA into RNA using the four ribonucleoside triphosphates as substrates. The protein is DNA-directed RNA polymerase subunit Rpo10 of Haloquadratum walsbyi (strain DSM 16790 / HBSQ001).